A 668-amino-acid chain; its full sequence is tRNA 5-methylaminomethyl-2-thiouridine biosynthesis bifunctional protein MnmC (668 aa).

A tRNA (mnm(5)s(2)U34)-methyltransferase region spans residues 1-245 (MKHYSIQPAN…KREMLCGVME (245 aa)). The FAD-dependent cmnm(5)s(2)U34 oxidoreductase stretch occupies residues 270–668 (IGGGIASALL…LLKGKAVKAG (399 aa)).

This sequence in the N-terminal section; belongs to the methyltransferase superfamily. tRNA (mnm(5)s(2)U34)-methyltransferase family. The protein in the C-terminal section; belongs to the DAO family. The cofactor is FAD.

It is found in the cytoplasm. It carries out the reaction 5-aminomethyl-2-thiouridine(34) in tRNA + S-adenosyl-L-methionine = 5-methylaminomethyl-2-thiouridine(34) in tRNA + S-adenosyl-L-homocysteine + H(+). Functionally, catalyzes the last two steps in the biosynthesis of 5-methylaminomethyl-2-thiouridine (mnm(5)s(2)U) at the wobble position (U34) in tRNA. Catalyzes the FAD-dependent demodification of cmnm(5)s(2)U34 to nm(5)s(2)U34, followed by the transfer of a methyl group from S-adenosyl-L-methionine to nm(5)s(2)U34, to form mnm(5)s(2)U34. This Escherichia coli O157:H7 protein is tRNA 5-methylaminomethyl-2-thiouridine biosynthesis bifunctional protein MnmC.